The chain runs to 197 residues: Histone chaperone asf1b-B (197 aa).

The protein belongs to the ASF1 family. Interacts with histone H3 and histone H4.

It is found in the nucleus. Histone chaperone that facilitates histone deposition and histone exchange and removal during nucleosome assembly and disassembly. The chain is Histone chaperone asf1b-B (asf1bb) from Danio rerio (Zebrafish).